A 257-amino-acid polypeptide reads, in one-letter code: tRNA (guanine-N(1)-)-methyltransferase (257 aa).

S-adenosyl-L-methionine is bound by residues G117 and 137 to 142 (LGDFVL).

It belongs to the RNA methyltransferase TrmD family. As to quaternary structure, homodimer.

The protein resides in the cytoplasm. It carries out the reaction guanosine(37) in tRNA + S-adenosyl-L-methionine = N(1)-methylguanosine(37) in tRNA + S-adenosyl-L-homocysteine + H(+). Functionally, specifically methylates guanosine-37 in various tRNAs. The chain is tRNA (guanine-N(1)-)-methyltransferase from Bordetella pertussis (strain Tohama I / ATCC BAA-589 / NCTC 13251).